The sequence spans 193 residues: Shikimate kinase (193 aa).

31-36 lines the ATP pocket; sequence GVGKTT. A Mg(2+)-binding site is contributed by Thr-35. Positions 53, 77, and 103 each coordinate substrate. Residue Arg-141 participates in ATP binding. Arg-160 contributes to the substrate binding site. Gln-176 provides a ligand contact to ATP.

The protein belongs to the shikimate kinase family. Monomer. The cofactor is Mg(2+).

It is found in the cytoplasm. It carries out the reaction shikimate + ATP = 3-phosphoshikimate + ADP + H(+). Its pathway is metabolic intermediate biosynthesis; chorismate biosynthesis; chorismate from D-erythrose 4-phosphate and phosphoenolpyruvate: step 5/7. Its function is as follows. Catalyzes the specific phosphorylation of the 3-hydroxyl group of shikimic acid using ATP as a cosubstrate. This Novosphingobium aromaticivorans (strain ATCC 700278 / DSM 12444 / CCUG 56034 / CIP 105152 / NBRC 16084 / F199) protein is Shikimate kinase.